We begin with the raw amino-acid sequence, 441 residues long: Putative F-box/FBD/LRR-repeat protein At4g00315 (441 aa).

The region spanning 1-47 (MDKTSQLPDELLVKVLSFLPTKDAVRTSLLSMRWKSLWMWLPKLEYD) is the F-box domain. 8 LRR repeats span residues 57–82 (QGLARFITLSLLGHKAPAIESLSLKL), 87–115 (IGSIKPEDIYLWVSLAVHDSNVRELSLKL), 137–164 (ILKLKDEILVDVPRKVCLPSLKTLFLGR), 165–190 (VTYSDEDSLHRLLSNCPVLEDLVVER), 211–236 (LKMSCPCHLDGIMMNTPSLKYLKVTD), 243–271 (SDNESDSDSPRYFYDFEDMPKLEEADFVL), 293–318 (LGVYTEESLYHEGLVFNQLEQLKICS), and 319–344 (CDSDWSILLSRLLESSPNLRELEAYV). In terms of domain architecture, FBD spans 358–410 (QWGNQLNCVPKCLLSSLETFKWSEMYGLLQNQMDVAKYILRNARCLKSATIFF).

This Arabidopsis thaliana (Mouse-ear cress) protein is Putative F-box/FBD/LRR-repeat protein At4g00315.